A 644-amino-acid polypeptide reads, in one-letter code: DNA mismatch repair protein MutL (644 aa).

The interval 336 to 400 is disordered; sequence ERPFEPSSPQ…EISRDSSLGE (65 aa). Basic and acidic residues predominate over residues 373-400; that stretch reads SKTHSTWDEASRVDTSRAEISRDSSLGE.

The protein belongs to the DNA mismatch repair MutL/HexB family.

This protein is involved in the repair of mismatches in DNA. It is required for dam-dependent methyl-directed DNA mismatch repair. May act as a 'molecular matchmaker', a protein that promotes the formation of a stable complex between two or more DNA-binding proteins in an ATP-dependent manner without itself being part of a final effector complex. The sequence is that of DNA mismatch repair protein MutL from Shewanella sp. (strain MR-7).